A 284-amino-acid polypeptide reads, in one-letter code: Bifunctional protein FolD 2 (284 aa).

NADP(+)-binding positions include 166 to 168 (GAS) and I232.

The protein belongs to the tetrahydrofolate dehydrogenase/cyclohydrolase family. In terms of assembly, homodimer.

It carries out the reaction (6R)-5,10-methylene-5,6,7,8-tetrahydrofolate + NADP(+) = (6R)-5,10-methenyltetrahydrofolate + NADPH. The enzyme catalyses (6R)-5,10-methenyltetrahydrofolate + H2O = (6R)-10-formyltetrahydrofolate + H(+). It functions in the pathway one-carbon metabolism; tetrahydrofolate interconversion. Catalyzes the oxidation of 5,10-methylenetetrahydrofolate to 5,10-methenyltetrahydrofolate and then the hydrolysis of 5,10-methenyltetrahydrofolate to 10-formyltetrahydrofolate. The sequence is that of Bifunctional protein FolD 2 from Colwellia psychrerythraea (strain 34H / ATCC BAA-681) (Vibrio psychroerythus).